The primary structure comprises 680 residues: Lipase 1 (680 aa).

The first 34 residues, 1–34 (MKSQNKYSIRKFSVGASSILIATLLFLSGGQAQA), serve as a signal peptide directing secretion. Positions 35 to 290 (AEKQVNMGNS…AKAKDDQTNK (256 aa)) are excised as a propeptide. Positions 82–259 (KNLHNDKTIS…PTKDNDKKNG (178 aa)) are disordered. A compositionally biased stretch (basic and acidic residues) spans 84–112 (LHNDKTISEENHRKTDDLNKDQLKDDKKS). The span at 125–138 (KNNNANPSDVNQGL) shows a compositional bias: polar residues. Residues 148-170 (SKVASQQQSKEADNSQDSNANNN) show a composition bias toward low complexity. Over residues 204–223 (QPQQNNQANDKITNYNFNNE) the composition is skewed to polar residues. Residues 224 to 234 (QEVKPQKDEKT) show a composition bias toward basic and acidic residues. A compositionally biased stretch (polar residues) spans 235-246 (LSVSDLKNNQKS). Catalysis depends on serine 408, which acts as the Nucleophile. Aspartate 600 functions as the Charge relay system in the catalytic mechanism. Position 638 (aspartate 638) interacts with Ca(2+). Histidine 639 (charge relay system) is an active-site residue. Residues aspartate 641, aspartate 646, and aspartate 649 each coordinate Ca(2+).

This sequence belongs to the AB hydrolase superfamily. Lipase family.

The protein resides in the secreted. The catalysed reaction is a triacylglycerol + H2O = a diacylglycerol + a fatty acid + H(+). The polypeptide is Lipase 1 (lip1) (Staphylococcus aureus (strain MSSA476)).